A 335-amino-acid polypeptide reads, in one-letter code: Galactinol synthase 2 (335 aa).

Residue Lys-103 is part of the active site. Asp-119, Asp-121, and His-257 together coordinate Mn(2+).

The protein belongs to the glycosyltransferase 8 family. Galactosyltransferase subfamily. The cofactor is a divalent metal cation. In terms of tissue distribution, accumulates in mature seeds.

It localises to the cytoplasm. The enzyme catalyses myo-inositol + UDP-alpha-D-galactose = alpha-D-galactosyl-(1-&gt;3)-1D-myo-inositol + UDP + H(+). Galactinol synthase involved in the biosynthesis of raffinose family oligosaccharides (RFOs) that function as osmoprotectants. Promotes stress tolerance of factors such as drought, chilling, salinity and methylviologen (MV), a superoxide radical generating drug, by mediating an increase in levels of the endogenous osmoprotective compounds, galactinol and raffinose. The polypeptide is Galactinol synthase 2 (GOLS2) (Arabidopsis thaliana (Mouse-ear cress)).